A 239-amino-acid chain; its full sequence is Peroxygenase (239 aa).

G2 bears the N-acetylglycine mark. Positions H60–G95 constitute an EF-hand domain. Positions 73, 75, 77, and 84 each coordinate Ca(2+). A Proline-knot motif is present at residues P116–S125.

Belongs to the caleosin family. In terms of assembly, homodimer. The cofactor is heme b. It depends on Ca(2+) as a cofactor. As to expression, expressed in pollen (at protein level). Not expressed in leaf, root, stem, tepal, ovary, style, filament or stigma (at protein level).

It is found in the lipid droplet. Its subcellular location is the microsome membrane. The catalysed reaction is RH + ROOH = ROH + ROH.. Functionally, calcium-binding peroxygenase involved in the degradation of storage lipid in oil bodies. This chain is Peroxygenase, found in Lilium longiflorum (Trumpet lily).